The following is an 87-amino-acid chain: Homeotic protein ultrabithorax (87 aa).

Residues 22–27 (FYPWMA) carry the Antp-type hexapeptide motif.

Belongs to the Antp homeobox family. In the embryo, expression is seen in the epidermis, somatic and visceral mesoderm, and the peripheral and central nervous system.

The protein resides in the nucleus. Functionally, sequence-specific transcription factor which is part of a developmental regulatory system that provides cells with specific positional identities on the anterior-posterior axis. Binds the consensus region 5'-TTAAT[GT][GA]-3'. This homeotic protein controls development of the cells in the posterior thoracic and first abdominal segments. It activates the synthesis of the decapentaplegic (DPP) growth factor. This chain is Homeotic protein ultrabithorax (Ubx), found in Drosophila virilis (Fruit fly).